The sequence spans 127 residues: Large ribosomal subunit protein bL17 (127 aa).

This sequence belongs to the bacterial ribosomal protein bL17 family. As to quaternary structure, part of the 50S ribosomal subunit. Contacts protein L32.

This Vibrio vulnificus (strain CMCP6) protein is Large ribosomal subunit protein bL17.